The primary structure comprises 308 residues: MRIAFMGTPDFAVPTLDALVAAGHELAAVYCQPPRPAGRGKALMPSPVQRRAEELGIPVRHPVTLRDADAQAVFAALALDVAVVAAYGLILPQPILDAPRHGCLNVHGSLLPRWRGAAPVQRAILAGDPTTGVTIMQMERGLDTGPMLATVETPVDGKTAGELTDELARSGAALMVEVLADLPAHPPVVQPEEGVTYAAKIDKAESRIDFAEAAGQIERQVRAFNPAPGAWFEHQGERIRILACEAVDRHGPEAPGAVIDDALTIACIDGAIRPTRVQRAGKAAMSAGELLRGFAIPAGTQLASPPRT.

(6S)-5,6,7,8-tetrahydrofolate is bound at residue 109–112; that stretch reads SLLP.

It belongs to the Fmt family.

It carries out the reaction L-methionyl-tRNA(fMet) + (6R)-10-formyltetrahydrofolate = N-formyl-L-methionyl-tRNA(fMet) + (6S)-5,6,7,8-tetrahydrofolate + H(+). In terms of biological role, attaches a formyl group to the free amino group of methionyl-tRNA(fMet). The formyl group appears to play a dual role in the initiator identity of N-formylmethionyl-tRNA by promoting its recognition by IF2 and preventing the misappropriation of this tRNA by the elongation apparatus. The protein is Methionyl-tRNA formyltransferase of Rhizorhabdus wittichii (strain DSM 6014 / CCUG 31198 / JCM 15750 / NBRC 105917 / EY 4224 / RW1) (Sphingomonas wittichii).